Reading from the N-terminus, the 360-residue chain is Phosphoserine aminotransferase (360 aa).

Arginine 41 is an L-glutamate binding site. Tryptophan 101, threonine 152, aspartate 172, and glutamine 195 together coordinate pyridoxal 5'-phosphate. An N6-(pyridoxal phosphate)lysine modification is found at lysine 196. 237–238 (NT) provides a ligand contact to pyridoxal 5'-phosphate.

It belongs to the class-V pyridoxal-phosphate-dependent aminotransferase family. SerC subfamily. Homodimer. It depends on pyridoxal 5'-phosphate as a cofactor.

The protein localises to the cytoplasm. It carries out the reaction O-phospho-L-serine + 2-oxoglutarate = 3-phosphooxypyruvate + L-glutamate. The enzyme catalyses 4-(phosphooxy)-L-threonine + 2-oxoglutarate = (R)-3-hydroxy-2-oxo-4-phosphooxybutanoate + L-glutamate. It participates in amino-acid biosynthesis; L-serine biosynthesis; L-serine from 3-phospho-D-glycerate: step 2/3. Its pathway is cofactor biosynthesis; pyridoxine 5'-phosphate biosynthesis; pyridoxine 5'-phosphate from D-erythrose 4-phosphate: step 3/5. Catalyzes the reversible conversion of 3-phosphohydroxypyruvate to phosphoserine and of 3-hydroxy-2-oxo-4-phosphonooxybutanoate to phosphohydroxythreonine. This chain is Phosphoserine aminotransferase, found in Paraburkholderia phytofirmans (strain DSM 17436 / LMG 22146 / PsJN) (Burkholderia phytofirmans).